The following is a 380-amino-acid chain: GDP-mannose:cellobiosyl-diphosphopolyprenol alpha-mannosyltransferase (380 aa).

Belongs to the glycosyltransferase group 1 family. Glycosyltransferase 4 subfamily.

It catalyses the reaction beta-D-Glc-(1-&gt;4)-alpha-D-Glc-di-trans,octa-cis-undecaprenyl diphosphate + GDP-alpha-D-mannose = alpha-D-Man-(1-&gt;3)-beta-D-Glc-(1-&gt;4)-alpha-D-Glc-1-di-trans,octa-cis-undecaprenyl diphosphate + GDP + H(+). In terms of biological role, involved in the biosynthesis of the exopolysaccharide xanthan, a polymer that is comprised of repeating pentasaccharide units with the structure of a beta-(1,4)-linked D-glucose backbone with trisaccharide side chains composed of mannose-beta-(1,4)-glucuronic acid-beta-(1,2)-mannose attached to alternate glucose residues in the backbone by alpha-(1,3) linkages. Xanthan is involved in pathogenicity but has also been used in a variety of applications as a specialty polymer for commercial applications, including food additives, where they act as viscosifying, stabilizing, emulsifying, or gelling agents. In Xanthomonas campestris, this protein is GDP-mannose:cellobiosyl-diphosphopolyprenol alpha-mannosyltransferase (gumH).